The chain runs to 354 residues: Isopentenyl-diphosphate delta-isomerase (354 aa).

Residue 11–12 coordinates substrate; sequence KK. Residues S67, 68–70, S98, and N126 each bind FMN; that span reads SMT. Position 98–100 (98–100) interacts with substrate; it reads SFK. Q160 contacts substrate. E161 contributes to the Mg(2+) binding site. Residues K192, T222, and 289-290 contribute to the FMN site; that span reads AA.

Belongs to the IPP isomerase type 2 family. In terms of assembly, homooctamer. Dimer of tetramers. FMN serves as cofactor. Requires NADPH as cofactor. It depends on Mg(2+) as a cofactor.

Its subcellular location is the cytoplasm. The enzyme catalyses isopentenyl diphosphate = dimethylallyl diphosphate. Its function is as follows. Involved in the biosynthesis of isoprenoids. Catalyzes the 1,3-allylic rearrangement of the homoallylic substrate isopentenyl (IPP) to its allylic isomer, dimethylallyl diphosphate (DMAPP). The polypeptide is Isopentenyl-diphosphate delta-isomerase (Borrelia garinii subsp. bavariensis (strain ATCC BAA-2496 / DSM 23469 / PBi) (Borreliella bavariensis)).